Consider the following 291-residue polypeptide: Bis(5'-nucleosyl)-tetraphosphatase, symmetrical (291 aa).

It belongs to the Ap4A hydrolase family.

The enzyme catalyses P(1),P(4)-bis(5'-adenosyl) tetraphosphate + H2O = 2 ADP + 2 H(+). Its function is as follows. Hydrolyzes diadenosine 5',5'''-P1,P4-tetraphosphate to yield ADP. In Coxiella burnetii (strain CbuG_Q212) (Coxiella burnetii (strain Q212)), this protein is Bis(5'-nucleosyl)-tetraphosphatase, symmetrical.